Here is a 116-residue protein sequence, read N- to C-terminus: Large ribosomal subunit protein bL20 (116 aa).

Belongs to the bacterial ribosomal protein bL20 family.

Functionally, binds directly to 23S ribosomal RNA and is necessary for the in vitro assembly process of the 50S ribosomal subunit. It is not involved in the protein synthesizing functions of that subunit. This is Large ribosomal subunit protein bL20 from Synechococcus elongatus (strain ATCC 33912 / PCC 7942 / FACHB-805) (Anacystis nidulans R2).